The following is a 77-amino-acid chain: MKEKKSYTELMKSRNTQKTKEFDVTMTDIYIQMVLDESLYNRRLAMLTDQINKALDEKDKDAFLTLSKEYAALKQSE.

This is an uncharacterized protein from Bacillus subtilis (strain 168).